A 932-amino-acid polypeptide reads, in one-letter code: Protocadherin gamma-A8 (932 aa).

A signal peptide spans 1–29 (MAAPQSRPRRGELILLCALLGTLWEIGRG). Cadherin domains follow at residues 30 to 133 (QIRY…NPKF), 134 to 242 (QVED…APVF), 243 to 347 (PHPI…RPEV), 348 to 452 (IITS…PPTF), 453 to 562 (PHAS…APEI), and 570 to 682 (DGST…KPSV). The Extracellular portion of the chain corresponds to 30-692 (QIRYSVPEET…DPNDSSLTLY (663 aa)). Asparagine 47 is a glycosylation site (N-linked (GlcNAc...) asparagine). 3 N-linked (GlcNAc...) asparagine glycosylation sites follow: asparagine 414, asparagine 419, and asparagine 545. An N-linked (GlcNAc...) asparagine glycan is attached at asparagine 685. A helical membrane pass occupies residues 693-713 (LVVAVAAISCVFLAFVAVLLG). Residues 714–932 (LRLRRWHKSH…KKKSGKKEKK (219 aa)) are Cytoplasmic-facing. Disordered regions lie at residues 804 to 841 (ADHG…WPNN) and 902 to 932 (ATLT…KEKK). The segment covering 810 to 841 (APPNTDWRFSQAQRPGTSGSQNGDDTGTWPNN) has biased composition (polar residues). Over residues 922-932 (NKKKSGKKEKK) the composition is skewed to basic residues.

Its subcellular location is the cell membrane. Functionally, potential calcium-dependent cell-adhesion protein. May be involved in the establishment and maintenance of specific neuronal connections in the brain. The polypeptide is Protocadherin gamma-A8 (PCDHGA8) (Pan troglodytes (Chimpanzee)).